A 766-amino-acid polypeptide reads, in one-letter code: Protein zer-1 homolog (766 aa).

N-acetylalanine is present on A2. LRR repeat units follow at residues 226–245, 246–268, and 278–302; these read SLVLYNMDLSDDHIRVIVQL, HKLRHLDISRDRLSSYYKFKLTR, and LGNLMSLDISGHMILENCSISKMEE. ARM repeat units lie at residues 427-467, 511-556, 558-600, 602-643, and 714-756; these read RSEQ…NFGI, DNDH…NITD, TPDN…NVAE, KELR…HIMF, and PDKY…HCSN.

The protein belongs to the zyg-11 family. In terms of assembly, interacts with the ELOC-ELOB/Elongin BC complex. Part of an E3 ubiquitin ligase complex including ZER1, CUL2 and Elongin BC.

In terms of biological role, serves as substrate adapter subunit in the E3 ubiquitin ligase complex ZYG11B-CUL2-Elongin BC. Acts redudantly with ZYG11B to target substrates bearing N-terminal glycine degrons for proteasomal degradation. Involved in the clearance of proteolytic fragments generated by caspase cleavage during apoptosis since N-terminal glycine degrons are strongly enriched at caspase cleavage sites. Also important in the quality control of protein N-myristoylation in which N-terminal glycine degrons are conditionally exposed after a failure of N-myristoylation. The chain is Protein zer-1 homolog (ZER1) from Pongo abelii (Sumatran orangutan).